We begin with the raw amino-acid sequence, 216 residues long: N-(5'-phosphoribosyl)anthranilate isomerase (216 aa).

This sequence belongs to the TrpF family.

The enzyme catalyses N-(5-phospho-beta-D-ribosyl)anthranilate = 1-(2-carboxyphenylamino)-1-deoxy-D-ribulose 5-phosphate. It functions in the pathway amino-acid biosynthesis; L-tryptophan biosynthesis; L-tryptophan from chorismate: step 3/5. This is N-(5'-phosphoribosyl)anthranilate isomerase from Methanopyrus kandleri (strain AV19 / DSM 6324 / JCM 9639 / NBRC 100938).